A 464-amino-acid chain; its full sequence is Citrate synthase, mitochondrial (464 aa).

A mitochondrion-targeting transit peptide spans Met-1–Ser-27. Residues Ala-2 to Leu-21 carry the SIFI-degron motif. Lys-57 bears the N6-succinyllysine mark. Lys-76 is modified (N6-acetyllysine; alternate). Lys-76 carries the post-translational modification N6-succinyllysine; alternate. Lys-103 and Lys-193 each carry N6-succinyllysine. Ser-226 carries the phosphoserine modification. The active site involves His-301. N6-acetyllysine; alternate is present on residues Lys-321 and Lys-327. 2 positions are modified to N6-succinyllysine; alternate: Lys-321 and Lys-327. His-347 is an active-site residue. Arg-356 is an oxaloacetate binding site. Position 375 is an N6-acetyllysine; alternate (Lys-375). Lys-375 carries the post-translational modification N6-succinyllysine; alternate. At Lys-382 the chain carries N6-acetyllysine. Lys-393 carries the post-translational modification N6-acetyllysine; alternate. An N6-succinyllysine; alternate modification is found at Lys-393. Residue Lys-395 is modified to N6,N6,N6-trimethyllysine. Asp-402 is an active-site residue. Oxaloacetate-binding residues include Arg-428 and Arg-448. Residue Lys-450 is modified to N6-succinyllysine. The residue at position 459 (Lys-459) is an N6-acetyllysine; alternate. Lys-459 carries the post-translational modification N6-succinyllysine; alternate.

This sequence belongs to the citrate synthase family. Homodimer. Post-translationally, methylated. Trimethylation at Lys-395 by CSKMT decreases citrate synthase activity. In response to mitochondrial stress, the precursor protein is ubiquitinated by the SIFI complex in the cytoplasm before mitochondrial import, leading to its degradation. Within the SIFI complex, UBR4 initiates ubiquitin chain that are further elongated or branched by KCMF1.

It localises to the mitochondrion matrix. The catalysed reaction is oxaloacetate + acetyl-CoA + H2O = citrate + CoA + H(+). Its pathway is carbohydrate metabolism; tricarboxylic acid cycle; isocitrate from oxaloacetate: step 1/2. Functionally, key enzyme of the Krebs tricarboxylic acid cycle which catalyzes the synthesis of citrate from acetyl coenzyme A and oxaloacetate. The protein is Citrate synthase, mitochondrial (Cs) of Mus musculus (Mouse).